We begin with the raw amino-acid sequence, 442 residues long: MENAKMNSLIAQYPLVKDLVALKETTWFNPGTTSLAEGLPYVGLTEQDVQDAHARLSRFAPYLAKAFPETAATGGIIESELVAIPAMQKRLEKEYQQPISGQLLLKKDSHLPISGSIKARGGIYEVLAHAEKLALEAGLLTLEDDYSKLLSPEFKQFFSQYSIAVGSTGNLGLSIGIMSARIGFKVTVHMSADARAWKKAKLRSHGVTVVEYEQDYGVAVEEGRKAAQSDPNCFFIDDENSRTLFLGYSVAGQRLKAQFAQQGRIVDADNPLFVYLPCGVGGGPGGVAFGLKLAFGDHVHCFFAEPTHSPCMLLGVHTGLHDQISVQDIGIDNLTAADGLAVGRASGFVGRAMERLLDGFYTLSDQTMYDMLGWLAQEEGIRLEPSALAGMAGPQRVCASVSYQQMHGFSAEQLRNATHLVWATGGGMVPEEEMEQYLAKGH.

N6-(pyridoxal phosphate)lysine is present on Lys118.

This sequence belongs to the serine/threonine dehydratase family. DsdA subfamily. As to quaternary structure, monomer. Pyridoxal 5'-phosphate serves as cofactor.

It carries out the reaction D-serine = pyruvate + NH4(+). The protein is D-serine dehydratase 2 of Escherichia coli O6:K15:H31 (strain 536 / UPEC).